Here is a 951-residue protein sequence, read N- to C-terminus: Glycine dehydrogenase (decarboxylating) (951 aa).

K709 is subject to N6-(pyridoxal phosphate)lysine.

Belongs to the GcvP family. In terms of assembly, the glycine cleavage system is composed of four proteins: P, T, L and H. Requires pyridoxal 5'-phosphate as cofactor.

The enzyme catalyses N(6)-[(R)-lipoyl]-L-lysyl-[glycine-cleavage complex H protein] + glycine + H(+) = N(6)-[(R)-S(8)-aminomethyldihydrolipoyl]-L-lysyl-[glycine-cleavage complex H protein] + CO2. In terms of biological role, the glycine cleavage system catalyzes the degradation of glycine. The P protein binds the alpha-amino group of glycine through its pyridoxal phosphate cofactor; CO(2) is released and the remaining methylamine moiety is then transferred to the lipoamide cofactor of the H protein. The sequence is that of Glycine dehydrogenase (decarboxylating) from Gluconobacter oxydans (strain 621H) (Gluconobacter suboxydans).